The chain runs to 419 residues: Cytosine permease (419 aa).

The Cytoplasmic portion of the chain corresponds to 1-19; that stretch reads MSQDNNFSQGPVPQSARKG. The helical transmembrane segment at 20–39 threads the bilayer; the sequence is VLALTFVMLGLTFFSASMWT. Residues 40 to 51 lie on the Periplasmic side of the membrane; the sequence is GGTLGTGLSYHD. Residues 52–71 traverse the membrane as a helical segment; it reads FFLAVLIGNLLLGIYTSFLG. Residues 72–100 are Cytoplasmic-facing; the sequence is YIGAKTGLTTHLLARFSFGVKGSWLPSLL. Residues 101–120 traverse the membrane as a helical segment; sequence LGGTQVGWFGVGVAMFAIPV. The Periplasmic segment spans residues 121-127; sequence GKATGLD. A helical membrane pass occupies residues 128–147; the sequence is INLLIAVSGLLMTVTVFFGI. The Cytoplasmic portion of the chain corresponds to 148 to 152; that stretch reads SALTV. Residues 153–172 traverse the membrane as a helical segment; it reads LSLIAVPAIACLGGYSVWLA. At 173 to 192 the chain is on the periplasmic side; the sequence is VNGMGGLDALKAVVPAQPLD. The chain crosses the membrane as a helical span at residues 193–212; sequence FNVALALVVGSFISAGTLTA. Topologically, residues 213-221 are cytoplasmic; it reads DFVRFGRNA. A helical transmembrane segment spans residues 222-242; the sequence is KLAVLVAMVAFFLGNSLMFIF. At 243-257 the chain is on the periplasmic side; that stretch reads GAAGAAALGMADISD. A helical membrane pass occupies residues 258–277; that stretch reads VMIAQGLLLPAIVVLGLNIW. At 278 to 300 the chain is on the cytoplasmic side; it reads TTNDNALYASGLGFANITGMSSK. A helical transmembrane segment spans residues 301-320; that stretch reads TLSVINGIIGTVCALWLYNN. Phe321 is a topological domain (periplasmic). The chain crosses the membrane as a helical span at residues 322-341; it reads VGWLTFLSAAIPPVGGVIIA. Residues 342–358 are Cytoplasmic-facing; sequence DYLMNRRRYEHFATTRM. A helical transmembrane segment spans residues 359 to 378; it reads MSVNWVAILAVALGIAAGHW. Topologically, residues 379–380 are periplasmic; that stretch reads LP. A helical membrane pass occupies residues 381–400; the sequence is GIVPVNAVLGGALSYLILNP. The Cytoplasmic segment spans residues 401 to 419; sequence ILNRKTTAAMTHVEANSVE.

This sequence belongs to the purine-cytosine permease (2.A.39) family.

It is found in the cell inner membrane. Functionally, required for cytosine transport into the cell. The chain is Cytosine permease (codB) from Escherichia coli O157:H7.